Consider the following 483-residue polypeptide: Regulatory protein ViaA (483 aa).

It belongs to the ViaA family. In terms of assembly, homodimer. Interacts with RavA.

The protein localises to the cytoplasm. In terms of biological role, component of the RavA-ViaA chaperone complex, which may act on the membrane to optimize the function of some of the respiratory chains. ViaA stimulates the ATPase activity of RavA. The sequence is that of Regulatory protein ViaA from Escherichia coli O6:K15:H31 (strain 536 / UPEC).